Reading from the N-terminus, the 333-residue chain is Type II restriction enzyme XcyI (333 aa).

The protein belongs to the XcyI type II restriction endonuclease family. In terms of assembly, monomer. Mg(2+) serves as cofactor.

The enzyme catalyses Endonucleolytic cleavage of DNA to give specific double-stranded fragments with terminal 5'-phosphates.. A P subtype restriction enzyme that recognizes the double-stranded sequence 5'-CCCGGG-3' and cleaves after C-1. The polypeptide is Type II restriction enzyme XcyI (xcyIR) (Xanthomonas campestris pv. cyanopsidis).